The sequence spans 234 residues: Phosphoribosylformylglycinamidine synthase subunit PurQ (234 aa).

Positions 4–234 (RIGVVTFPGS…TSILKKLVNA (231 aa)) constitute a Glutamine amidotransferase type-1 domain. Cys87 acts as the Nucleophile in catalysis. Residues His204 and Glu206 contribute to the active site.

Part of the FGAM synthase complex composed of 1 PurL, 1 PurQ and 2 PurS subunits.

Its subcellular location is the cytoplasm. The catalysed reaction is N(2)-formyl-N(1)-(5-phospho-beta-D-ribosyl)glycinamide + L-glutamine + ATP + H2O = 2-formamido-N(1)-(5-O-phospho-beta-D-ribosyl)acetamidine + L-glutamate + ADP + phosphate + H(+). The enzyme catalyses L-glutamine + H2O = L-glutamate + NH4(+). Its pathway is purine metabolism; IMP biosynthesis via de novo pathway; 5-amino-1-(5-phospho-D-ribosyl)imidazole from N(2)-formyl-N(1)-(5-phospho-D-ribosyl)glycinamide: step 1/2. Functionally, part of the phosphoribosylformylglycinamidine synthase complex involved in the purines biosynthetic pathway. Catalyzes the ATP-dependent conversion of formylglycinamide ribonucleotide (FGAR) and glutamine to yield formylglycinamidine ribonucleotide (FGAM) and glutamate. The FGAM synthase complex is composed of three subunits. PurQ produces an ammonia molecule by converting glutamine to glutamate. PurL transfers the ammonia molecule to FGAR to form FGAM in an ATP-dependent manner. PurS interacts with PurQ and PurL and is thought to assist in the transfer of the ammonia molecule from PurQ to PurL. The chain is Phosphoribosylformylglycinamidine synthase subunit PurQ from Streptomyces avermitilis (strain ATCC 31267 / DSM 46492 / JCM 5070 / NBRC 14893 / NCIMB 12804 / NRRL 8165 / MA-4680).